Here is a 308-residue protein sequence, read N- to C-terminus: Cap-specific mRNA (nucleoside-2'-O-)-methyltransferase (308 aa).

Y30 contributes to the mRNA binding site. Positions 46, 74, 76, 80, 103, 105, 124, and 147 each coordinate S-adenosyl-L-methionine. The binding to NPH-I stretch occupies residues 177 to 257; it reads PIASSLKWRC…NTKIRPKIVL (81 aa). The active-site For methyltransferase activity is K183. MRNA-binding positions include 185–188, D190, 213–215, and E241; these read RCPF and SAE.

Belongs to the class I-like SAM-binding methyltransferase superfamily. Poxvirus/kinetoplastid 2'-O-MTase family. In terms of assembly, interacts with poly(A) polymerase catalytic subunit OPG063. Interacts with OPG109 and OPG123; these interactions might help linking transcription to capping and polyadenylation.

It is found in the virion. It carries out the reaction a 5'-end (N(7)-methyl 5'-triphosphoguanosine)-ribonucleoside in mRNA + S-adenosyl-L-methionine = a 5'-end (N(7)-methyl 5'-triphosphoguanosine)-(2'-O-methyl-ribonucleoside) in mRNA + S-adenosyl-L-homocysteine + H(+). In terms of biological role, displays methyltransferase, positive regulation of the poly(A) polymerase and transcription elongation activities. Involved in the modification of both mRNA ends and in intermediate and late gene positive transcription elongation. At the mRNAs 5' end, methylates the ribose 2' OH group of the first transcribed nucleotide, thereby producing a 2'-O-methylpurine cap. At the 3' end, functions as a processivity factor which stimulates the activity of the viral poly(A) polymerase OPG063 that creates mRNA's poly(A) tail. In the presence of OPG102, OPG063 does not dissociate from the RNA allowing tail elongation to around 250 adenylates. The polypeptide is Cap-specific mRNA (nucleoside-2'-O-)-methyltransferase (OPG102) (Fowlpox virus (strain NVSL) (FPV)).